The chain runs to 453 residues: tRNA modification GTPase MnmE (453 aa).

Positions 22, 79, and 119 each coordinate (6S)-5-formyl-5,6,7,8-tetrahydrofolate. Residues 215–376 (GMKVVIAGRP…LKQHLKSLMG (162 aa)) enclose the TrmE-type G domain. K(+) is bound at residue Asn-225. GTP is bound by residues 225–230 (NAGKSS), 244–250 (TDIAGTT), 269–272 (DTAG), and 334–337 (NKAD). Ser-229 contributes to the Mg(2+) binding site. Residues Thr-244, Ile-246, and Thr-249 each coordinate K(+). Residue Thr-250 coordinates Mg(2+). Position 453 (Lys-453) interacts with (6S)-5-formyl-5,6,7,8-tetrahydrofolate.

This sequence belongs to the TRAFAC class TrmE-Era-EngA-EngB-Septin-like GTPase superfamily. TrmE GTPase family. Homodimer. Heterotetramer of two MnmE and two MnmG subunits. The cofactor is K(+).

It localises to the cytoplasm. Its function is as follows. Exhibits a very high intrinsic GTPase hydrolysis rate. Involved in the addition of a carboxymethylaminomethyl (cmnm) group at the wobble position (U34) of certain tRNAs, forming tRNA-cmnm(5)s(2)U34. This is tRNA modification GTPase MnmE from Shewanella amazonensis (strain ATCC BAA-1098 / SB2B).